Here is a 71-residue protein sequence, read N- to C-terminus: Protein Tlp homolog (71 aa).

The interval 30–56 (ETLQNNSLSRDQRQAIMEKNKRREESI) is disordered. A compositionally biased stretch (basic and acidic residues) spans 39–56 (RDQRQAIMEKNKRREESI).

The protein belongs to the Tlp family.

The protein is Protein Tlp homolog of Desulforamulus reducens (strain ATCC BAA-1160 / DSM 100696 / MI-1) (Desulfotomaculum reducens).